A 581-amino-acid polypeptide reads, in one-letter code: NADH-quinone oxidoreductase subunit C/D (581 aa).

Positions 1 to 172 are NADH dehydrogenase I subunit C; the sequence is MSAFELVTEL…PLFNMTASLF (172 aa). Residues 196 to 581 form an NADH dehydrogenase I subunit D region; the sequence is ELMILNYGPH…IDYVMSDVDR (386 aa).

This sequence in the N-terminal section; belongs to the complex I 30 kDa subunit family. In the C-terminal section; belongs to the complex I 49 kDa subunit family. As to quaternary structure, NDH-1 is composed of 13 different subunits. Subunits NuoB, CD, E, F, and G constitute the peripheral sector of the complex.

It localises to the cell inner membrane. The catalysed reaction is a quinone + NADH + 5 H(+)(in) = a quinol + NAD(+) + 4 H(+)(out). Functionally, NDH-1 shuttles electrons from NADH, via FMN and iron-sulfur (Fe-S) centers, to quinones in the respiratory chain. The immediate electron acceptor for the enzyme in this species is believed to be ubiquinone. Couples the redox reaction to proton translocation (for every two electrons transferred, four hydrogen ions are translocated across the cytoplasmic membrane), and thus conserves the redox energy in a proton gradient. The sequence is that of NADH-quinone oxidoreductase subunit C/D from Rhodopseudomonas palustris (strain ATCC BAA-98 / CGA009).